We begin with the raw amino-acid sequence, 196 residues long: Pyridoxal 5'-phosphate synthase subunit PdxT (196 aa).

Residue 46–48 (GES) coordinates L-glutamine. Cys-78 (nucleophile) is an active-site residue. L-glutamine-binding positions include Arg-105 and 133 to 134 (IR). Residues His-169 and Glu-171 each act as charge relay system in the active site.

It belongs to the glutaminase PdxT/SNO family. As to quaternary structure, in the presence of PdxS, forms a dodecamer of heterodimers. Only shows activity in the heterodimer.

The enzyme catalyses aldehydo-D-ribose 5-phosphate + D-glyceraldehyde 3-phosphate + L-glutamine = pyridoxal 5'-phosphate + L-glutamate + phosphate + 3 H2O + H(+). It catalyses the reaction L-glutamine + H2O = L-glutamate + NH4(+). It participates in cofactor biosynthesis; pyridoxal 5'-phosphate biosynthesis. Functionally, catalyzes the hydrolysis of glutamine to glutamate and ammonia as part of the biosynthesis of pyridoxal 5'-phosphate. The resulting ammonia molecule is channeled to the active site of PdxS. The protein is Pyridoxal 5'-phosphate synthase subunit PdxT of Geobacillus stearothermophilus (Bacillus stearothermophilus).